The sequence spans 226 residues: Ribosome maturation factor RimM (226 aa).

The 82-residue stretch at 144–225 (ADEFYWVDLI…RIVVDWEADY (82 aa)) folds into the PRC barrel domain.

This sequence belongs to the RimM family. As to quaternary structure, binds ribosomal protein uS19.

It localises to the cytoplasm. Its function is as follows. An accessory protein needed during the final step in the assembly of 30S ribosomal subunit, possibly for assembly of the head region. Essential for efficient processing of 16S rRNA. May be needed both before and after RbfA during the maturation of 16S rRNA. It has affinity for free ribosomal 30S subunits but not for 70S ribosomes. The polypeptide is Ribosome maturation factor RimM (Burkholderia ambifaria (strain ATCC BAA-244 / DSM 16087 / CCUG 44356 / LMG 19182 / AMMD) (Burkholderia cepacia (strain AMMD))).